We begin with the raw amino-acid sequence, 678 residues long: Protein distal antenna (678 aa).

Positions 7–58 constitute an HTH psq-type domain; that stretch reads TKGKRPLRSLTPRDKIHAIQRIHDGESKASVARDIGVPESTLRGWCKNEDKL. Residues 34-54 constitute a DNA-binding region (H-T-H motif); that stretch reads KASVARDIGVPESTLRGWCKN. Disordered regions lie at residues 232 to 310, 344 to 381, 445 to 528, 541 to 592, and 645 to 678; these read GAGN…GGPM, GVTSPPIRSSTPQHMSQLAQTPPIPSAPLTPSSTPSGS, KETE…TSEC, GMEA…DEEE, and NETPMIEKSALPEDSEEHAAEEEGSGRGKSRRRK. 2 stretches are compositionally biased toward polar residues: residues 241-254 and 349-363; these read PSGQTPLQVQSPRS and PIRSSTPQHMSQLAQ. Phosphoserine is present on residues Ser251 and Ser254. A compositionally biased stretch (low complexity) spans 372 to 381; sequence LTPSSTPSGS. Polar residues predominate over residues 449-461; it reads TPSVRSLSSNEQN. Acidic residues predominate over residues 462-478; sequence PEADEATETDLDGEVEP. A compositionally biased stretch (polar residues) spans 495-508; it reads TPSQSPIAHSSGSR. The segment covering 570 to 586 has biased composition (low complexity); that stretch reads NNNDVSASNNNNNNNSN. The span at 657 to 667 shows a compositional bias: acidic residues; the sequence is EDSEEHAAEEE.

As to quaternary structure, homomers. Interacts with itself, danr, ey and dac to form a complex (or complexes) containing the RD factors. As to expression, coexpressed with danr in the presumptive distal antenna, but not in the leg imaginal disk. Both proteins are also expressed in the brain and the eye region of the eye-antenna disk. First detected in early L3 eye disks in cells surrounding the newly initiated MF. Levels are uniform and high anterior to the furrow, lower levels within and posterior to the furrow. Limited expression is seen in small groups of cells in leg and wing. These appear in the location of prominent sense organ progenitors at relatively late stages of disk development.

It localises to the nucleus. Functionally, probable transcription factor with a role in the retinal determination (RD) network. Regulates ato expression and is required for normal R8 induction and differentiation. Danr appears to repress Dan expression, but Dan is required for Danr expression anterior to the morphogenetic furrow (MF). Dan and Danr lie downstream of so and require dac function for highest levels of expression. Contributes to differentiation of antenna-specific characteristics; effector gene that acts downstream of homothorax (hth), Distal-less (Dll), cut (ct) and spineless (ss) genes to control differentiation of distal antennal structures. The sequence is that of Protein distal antenna from Drosophila melanogaster (Fruit fly).